The following is a 103-amino-acid chain: Pyrimidine/purine nucleoside phosphorylase (103 aa).

This sequence belongs to the nucleoside phosphorylase PpnP family.

The enzyme catalyses a purine D-ribonucleoside + phosphate = a purine nucleobase + alpha-D-ribose 1-phosphate. It carries out the reaction adenosine + phosphate = alpha-D-ribose 1-phosphate + adenine. The catalysed reaction is cytidine + phosphate = cytosine + alpha-D-ribose 1-phosphate. It catalyses the reaction guanosine + phosphate = alpha-D-ribose 1-phosphate + guanine. The enzyme catalyses inosine + phosphate = alpha-D-ribose 1-phosphate + hypoxanthine. It carries out the reaction thymidine + phosphate = 2-deoxy-alpha-D-ribose 1-phosphate + thymine. The catalysed reaction is uridine + phosphate = alpha-D-ribose 1-phosphate + uracil. It catalyses the reaction xanthosine + phosphate = alpha-D-ribose 1-phosphate + xanthine. Functionally, catalyzes the phosphorolysis of diverse nucleosides, yielding D-ribose 1-phosphate and the respective free bases. Can use uridine, adenosine, guanosine, cytidine, thymidine, inosine and xanthosine as substrates. Also catalyzes the reverse reactions. The polypeptide is Pyrimidine/purine nucleoside phosphorylase (Laribacter hongkongensis (strain HLHK9)).